A 402-amino-acid chain; its full sequence is LIM/homeobox protein Lhx5 (402 aa).

LIM zinc-binding domains lie at 3-61 (VHCA…RRFG) and 62-125 (TKCA…SSSL). The span at 124-135 (SLKEGSLNSVSS) shows a compositional bias: low complexity. Disordered stretches follow at residues 124 to 186 (SLKE…PRTT) and 298 to 402 (HGPP…AAVW). Basic and acidic residues predominate over residues 151-167 (DDPKETDNSTSSDKETA). A DNA-binding region (homeobox) is located at residues 180–239 (RRGPRTTIKAKQLETLKAAFAATPKPTRHIREQLAQETGLNMRVIQVWFQNRRSKERRMK). 2 stretches are compositionally biased toward low complexity: residues 300–311 (PPSQAQSPADSS) and 322–336 (PLGA…PHAA).

As to expression, expressed in fetal brain and in various regions of the adult central nervous system including the spinal cord, the thalamus, and the cerebellum.

It localises to the nucleus. Its function is as follows. Plays an essential role in the regulation of neuronal differentiation and migration during development of the central nervous system. The protein is LIM/homeobox protein Lhx5 (LHX5) of Homo sapiens (Human).